Consider the following 256-residue polypeptide: DNA repair protein RecO (256 aa).

It belongs to the RecO family.

Functionally, involved in DNA repair and RecF pathway recombination. The sequence is that of DNA repair protein RecO from Rhizobium etli (strain CIAT 652).